A 1407-amino-acid chain; its full sequence is MKDLLKFLKAQTKTEEFDAIKIALASPDMIRSWSFGEVKKPETINYRTFKPERDGLFCARIFGPVKDYECLCGKYKRLKHRGVICEKCGVEVTQTKVRRERMGHIELASPTAHIWFLKSLPSRIGLLLDMPLRDIERVLYFESYVVIEGGMTNLERQQILTEEQYLDALEEFGDEFDAKMGAEAIQALLKSMDLEQECEQLREELNETNSETKRKKLTKRIKLLEAFVQSGNKPEWMILTVLPVLPPDLRPLVPLDGGRFATSDLNDLYRRVINRNNRLKRLLDLAAPDIIVRNEKRMLQEAVDALLDNGRRGRAITGSNKRPLKSLADMIKGKQGRFRQNLLGKRVDYSGRSVITVGPYLRLHQCGLPKKMALELFKPFIYGKLELRGLATTIKAAKKMVEREEAVVWDILDEVIREHPVLLNRAPTLHRLGIQAFEPVLIEGKAIQLHPLVCAAYNADFDGDQMAVHVPLTLEAQLEARALMMSTNNILSPANGEPIIVPSQDVVLGLYYMTRDCVNAKGEGMVLTGPKEAERLYRSGLASLHARVKVRITEYKKDANGELVAKTSLKDTTVGRAILWMIVPKGLPYSIVNQALGKKAISKMLNTCYRILGLKPTVIFADQIMYTGFTYAARSGASVGIDDMVIPEKKHEIISEAEAEVAEIQEQFQSGLVTAGERYNKVIDIWAAANDRVSKAMMDNLQTETVINRDGQEEKQVSFNSIYMMADSGARGSAAQIRQLAGMRGLMAKPDGSIIETPITANFREGLNVLQYFISTHGARKGLADTALKTANSGYLTRRLVDVAQDLVVTEDDCGTHEGIMMTPVIEGGDVKEPLRDRVLGRVTAEDVLKPGTANILVPRNTLLHEQWCDLLEENSVDAVKVRSVVSCDTDFGVCAHCYGRDLARGHIINKGEAIGVIAAQSIGEPGTQLTMRTFHIGGAASRAAAESSIQVKNKGSIKLSNVKSVVNSSGKLVITSRNTELKLIDEFGRTKESYKVPYGAVLAKGDGEQVAGGETVANWDPHTMPVITEVSGFVRFTDMIDGQTITRQTDELTGLSSLVVLDSAERTAGGKDLRPALKIVDAQGNDVLIPGTDMPAQYFLPGKAIVQLEDGVQISSGDTLARIPQESGGTKDITGGLPRVADLFEARRPKEPAILAEISGIVSFGKETKGKRRLVITPVDGSDPYEEMIPKWRQLNVFEGERVERGDVISDGPEAPHDILRLRGVHAVTRYIVNEVQDVYRLQGVKINDKHIEVIVRQMLRKATIVNAGSSDFLEGEQVEYSRVKIANRELEANGKVGATYSRDLLGITKASLATESFISAASFQETTRVLTEAAVAGKRDELRGLKENVIVGRLIPAGTGYAYHQDRMRRRAAGEAPAAPQVTAEDASASLAELLNAGLGGSDNE.

C70, C72, C85, and C88 together coordinate Zn(2+). Mg(2+) is bound by residues D460, D462, and D464. C814, C888, C895, and C898 together coordinate Zn(2+). An N6-acetyllysine modification is found at K972.

The protein belongs to the RNA polymerase beta' chain family. The RNAP catalytic core consists of 2 alpha, 1 beta, 1 beta' and 1 omega subunit. When a sigma factor is associated with the core the holoenzyme is formed, which can initiate transcription. It depends on Mg(2+) as a cofactor. Requires Zn(2+) as cofactor.

It carries out the reaction RNA(n) + a ribonucleoside 5'-triphosphate = RNA(n+1) + diphosphate. In terms of biological role, DNA-dependent RNA polymerase catalyzes the transcription of DNA into RNA using the four ribonucleoside triphosphates as substrates. The polypeptide is DNA-directed RNA polymerase subunit beta' (Shigella dysenteriae serotype 1 (strain Sd197)).